A 329-amino-acid polypeptide reads, in one-letter code: Glycerol-3-phosphate dehydrogenase [NAD(P)+] (329 aa).

The NADPH site is built by Ser13, Trp14, His34, and Lys105. Residues Lys105, Gly134, and Ser136 each coordinate sn-glycerol 3-phosphate. Residue Ala138 coordinates NADPH. Residues Lys189, Asp242, Ser252, Arg253, and Asn254 each coordinate sn-glycerol 3-phosphate. The active-site Proton acceptor is Lys189. Residue Arg253 participates in NADPH binding. NADPH contacts are provided by Val277 and Glu279.

It belongs to the NAD-dependent glycerol-3-phosphate dehydrogenase family.

The protein localises to the cytoplasm. The enzyme catalyses sn-glycerol 3-phosphate + NAD(+) = dihydroxyacetone phosphate + NADH + H(+). It catalyses the reaction sn-glycerol 3-phosphate + NADP(+) = dihydroxyacetone phosphate + NADPH + H(+). It functions in the pathway membrane lipid metabolism; glycerophospholipid metabolism. Its function is as follows. Catalyzes the reduction of the glycolytic intermediate dihydroxyacetone phosphate (DHAP) to sn-glycerol 3-phosphate (G3P), the key precursor for phospholipid synthesis. The protein is Glycerol-3-phosphate dehydrogenase [NAD(P)+] of Legionella pneumophila (strain Paris).